The following is a 595-amino-acid chain: Sucrose transport protein SUT4 (595 aa).

At 1-61 (MDSAAGGGGL…PAARTTTTRK (61 aa)) the chain is on the cytoplasmic side. Residues 29 to 55 (SLNGGTPRGGSPKDPDATHQQGPPAAR) form a disordered region. The helical transmembrane segment at 62–82 (LVLACMVAAGVQFGWALQLSL) threads the bilayer. The Extracellular segment spans residues 83–97 (LTPYIQTLGIDHAMA). The chain crosses the membrane as a helical span at residues 98–118 (SFIWLCGPITGFVVQPCVGVW). Residues 119–130 (SDKCRSKYGRRR) are Cytoplasmic-facing. The chain crosses the membrane as a helical span at residues 131–151 (PFILAGCLMICFAVTLIGFSA). The Extracellular portion of the chain corresponds to 152 to 173 (DLGYILGDTTEHCSTYKGSRFR). A helical transmembrane segment spans residues 174 to 194 (AAIIFVLGFWMLDLANNTVQG). At 195–213 (PARALLADLSGPDQCNSAN) the chain is on the cytoplasmic side. The helical transmembrane segment at 214 to 234 (AIFCTWMAVGNVLGFSSGASG) threads the bilayer. At 235–256 (NWHKWFPFLMTRACCEACSNLK) the chain is on the extracellular side. The helical transmembrane segment at 257 to 277 (AAFLVAVVFLLFCMSVTLYFA) threads the bilayer. Residues 278–365 (EEIPLEPTDA…LTSMRHLPPG (88 aa)) lie on the Cytoplasmic side of the membrane. The disordered stretch occupies residues 291 to 340 (SDSAPLLNGSRDDNNASNEPRNGALPNGHTDGSNVPANSNAEDSNSNREN). A compositionally biased stretch (polar residues) spans 320–334 (TDGSNVPANSNAEDS). A helical membrane pass occupies residues 366–386 (MYSVLLVMALTWLSWFPFFLF). Residues 387–417 (DTDWMGREVYHGDPNGNLSERKAYDNGVREG) are Extracellular-facing. N-linked (GlcNAc...) asparagine glycosylation is present at N403. Residues 418-438 (AFGLLLNSVVLGIGSFLVDPL) traverse the membrane as a helical segment. Residues 439 to 447 (CRLMGARLV) are Cytoplasmic-facing. A helical transmembrane segment spans residues 448 to 468 (WAISNFTVFICMLATAILSWI). Residues 469 to 491 (SFDLYSSKLHHIIGANKTVKNSA) lie on the Extracellular side of the membrane. Residue N484 is glycosylated (N-linked (GlcNAc...) asparagine). A helical transmembrane segment spans residues 492-512 (LIVFSLLGLPLSITYSVPFSV). The Cytoplasmic segment spans residues 513-525 (TAELTAGTGGGQG). The helical transmembrane segment at 526 to 546 (LATGVLNLAIVVPQIVVSLGA) threads the bilayer. Over 547–556 (GPWDALFGGG) the chain is Extracellular. Residues 557-577 (NVPAFALASVFSLGAGVLAVL) form a helical membrane-spanning segment. Over 578-595 (KLPKLPNSYRSAGFHGFG) the chain is Cytoplasmic.

The protein belongs to the glycoside-pentoside-hexuronide (GPH) cation symporter transporter (TC 2.A.2.4) family. Homodimer.

The protein localises to the cell membrane. It participates in glycan biosynthesis; sucrose metabolism. Functionally, responsible for the transport of sucrose into the cell, with the concomitant uptake of protons (symport system). May also transport other glucosides. This Oryza sativa subsp. indica (Rice) protein is Sucrose transport protein SUT4 (SUT4).